The following is a 337-amino-acid chain: Glyceraldehyde-3-phosphate dehydrogenase (337 aa).

Residues 11–12 (TI) and Gly-110 each bind NAD(+). Position 139 to 141 (139 to 141 (SCN)) interacts with D-glyceraldehyde 3-phosphate. Cys-140 (nucleophile) is an active-site residue. Arg-168 provides a ligand contact to NAD(+). 194-195 (HG) provides a ligand contact to D-glyceraldehyde 3-phosphate. Gln-301 is a binding site for NAD(+).

This sequence belongs to the glyceraldehyde-3-phosphate dehydrogenase family. Homotetramer.

The protein localises to the cytoplasm. It carries out the reaction D-glyceraldehyde 3-phosphate + phosphate + NADP(+) = (2R)-3-phospho-glyceroyl phosphate + NADPH + H(+). It catalyses the reaction D-glyceraldehyde 3-phosphate + phosphate + NAD(+) = (2R)-3-phospho-glyceroyl phosphate + NADH + H(+). It participates in carbohydrate degradation; glycolysis; pyruvate from D-glyceraldehyde 3-phosphate: step 1/5. The sequence is that of Glyceraldehyde-3-phosphate dehydrogenase (gap) from Methanothermobacter thermautotrophicus (strain ATCC 29096 / DSM 1053 / JCM 10044 / NBRC 100330 / Delta H) (Methanobacterium thermoautotrophicum).